The following is a 783-amino-acid chain: Na(+)/H(+) exchanger protein 7 (783 aa).

Residues 1 to 18 form a helical membrane-spanning segment; the sequence is MWIKLLFFFTTLLVSTSG. At 19-108 the chain is on the extracellular side; sequence LGDDGITALL…WHWDYVKNEL (90 aa). The chain crosses the membrane as a helical span at residues 109 to 129; that stretch reads VLTLFFIVIGLFKLVYHHTFV. The Cytoplasmic segment spans residues 130–132; sequence TRK. The helical transmembrane segment at 133 to 153 threads the bilayer; sequence ILPESCCLIFIGIAIGFFFVG. The Extracellular segment spans residues 154–159; it reads DATHAS. The helical transmembrane segment at 160–180 threads the bilayer; that stretch reads IKFLEFKSKVFFFYLLPPIIL. Over 181–206 the chain is Cytoplasmic; that stretch reads ESAYSLKDRAFIENIGTILLYAVVGT. Residues 207–227 form a helical membrane-spanning segment; it reads ILNIVLLAAALLILIWVGIMG. Topologically, residues 228-235 are extracellular; that stretch reads KYNLSVMD. A helical membrane pass occupies residues 236–256; sequence ILTFASLVAAVDPVAVLAVFQ. The Cytoplasmic segment spans residues 257–262; sequence EVGVNK. The chain crosses the membrane as a helical span at residues 263–283; that stretch reads MLYFMVFGESLFNDAVTIVCY. The Extracellular segment spans residues 284-299; sequence NLAIEFQTLPDFTWYH. The chain crosses the membrane as a helical span at residues 300–320; the sequence is GFLGLLSFLCVSIGGLIIGLI. Over 321–350 the chain is Cytoplasmic; sequence CGAISSFVTKFTTDVRVVEPVVLFGMAYLA. The helical transmembrane segment at 351-371 threads the bilayer; it reads YLGSEMFHFSGIIALIACGLF. The Extracellular portion of the chain corresponds to 372–390; sequence QTHYACCNISYKSFTSVMY. N379 carries N-linked (GlcNAc...) asparagine glycosylation. The helical intramembrane region spans 391–411; that stretch reads ITKVCSTLCESLIFIILGVML. Residues 412–424 lie on the Extracellular side of the membrane; it reads VNEREWFWTDWHP. The helical transmembrane segment at 425 to 445 threads the bilayer; it reads VFSAVSVVLCVVVRFGVTFFL. Over 446–464 the chain is Cytoplasmic; sequence TYFVNQFTGGVRHISFQEQ. A helical membrane pass occupies residues 465 to 485; sequence FIMSYGGLRGAVSFSLVFMIS. Residues 486-492 are Extracellular-facing; the sequence is ANPDVKN. The chain crosses the membrane as a helical span at residues 493–513; sequence TMLGATYAVILFTNIIQGSTI. Residues 514–783 are Cytoplasmic-facing; that stretch reads KLFVKWLNIR…TITESEETSF (270 aa). Positions 649-702 form a coiled coil; it reads DNEDADQRANELIKDVSSIRQLMHNPFEDCYLDRNLTHEEEKEQARLKMKKTRA. The interval 745-783 is disordered; it reads RPSTSTRVSVEDEEQGLTMKEMEEEHPLMTITESEETSF.

The protein belongs to the monovalent cation:proton antiporter 1 (CPA1) transporter (TC 2.A.36) family. In terms of assembly, interacts (via C-terminus) with cmd-1. As to expression, detected in the posterior cells of the intestine.

The protein localises to the basolateral cell membrane. Na+/H+ exchanger which mediates the transient acidification of the coelomic space and plays a role in contraction of posterior body muscles during defecation. Probably by regulating the defecation motor program, required for fatty acid uptake by intestinal cells. The protein is Na(+)/H(+) exchanger protein 7 of Caenorhabditis elegans.